Reading from the N-terminus, the 430-residue chain is Transcription factor PIF4 (430 aa).

Disordered regions lie at residues glutamine 42 to threonine 71, methionine 97 to proline 136, threonine 160 to arginine 183, aspartate 223 to glutamate 266, and serine 405 to histidine 430. Positions threonine 43 to leucine 60 are enriched in basic and acidic residues. A compositionally biased stretch (polar residues) spans arginine 61–threonine 71. Pro residues predominate over residues cysteine 126 to proline 136. Residues threonine 160–leucine 175 are compositionally biased toward polar residues. Residues asparagine 244–asparagine 253 are compositionally biased toward low complexity. Over residues arginine 257–glutamate 266 the composition is skewed to basic and acidic residues. The bHLH domain occupies arginine 257 to leucine 306. A compositionally biased stretch (low complexity) spans serine 405–proline 419.

Belongs to the bHLH protein family. As to quaternary structure, interacts preferentially with the Pfr form of phytochrome B (phyB). Binds DNA as a homodimer, but once bound to DNA, loses its capacity to interact with phyB. Interacts with APRR1/TOC1 and PIF3. Binds to RGL2 and RGA. Forms non-functional heterodimer with HFR1. Interacts with PHYB, CRY1 and CRY2 in the nucleus in response to low blue light (LBL). Interacts with FYPP1 and FYPP3. Associates to PTAC12/HMR/PAP5, which acts as a transcriptional coactivator to trigger the thermoresponsive growth-relevant genes and promote warm-temperature-dependent PIF4 accumulation. Interacts with MED14. Mainly expressed in leaves, stems and seedlings, and, to a lower extent, in fruits, flowers and roots.

The protein localises to the nucleus. Transcription factor acting negatively in the phytochrome B signaling pathway. May regulate the expression of a subset of genes involved in cell expansion by binding to the G-box motif. Activated by CRY1 and CRY2 in response to low blue light (LBL) by direct binding at chromatin on E-box variant 5'-CA[CT]GTG-3' to stimulate specific gene expression to adapt global physiology (e.g. hypocotyl elongation in low blue light). Element of a PIF4/HMR/MED14-dependent thermoresponsive process; collaboratively with its transcriptional coactivator PTAC12/HMR/PAP5, involved in the regulation of thermoresponsive growth-relevant genes (e.g. mainly involved in biosynthesis and signaling of the phytohormone auxin) leading to daytime warm temperature elicitation of MED14-dependent thermomorphogenesis (e.g. hypocotyl elongation). In Arabidopsis thaliana (Mouse-ear cress), this protein is Transcription factor PIF4.